The following is a 295-amino-acid chain: ATP synthase gamma chain (295 aa).

The protein belongs to the ATPase gamma chain family. As to quaternary structure, F-type ATPases have 2 components, CF(1) - the catalytic core - and CF(0) - the membrane proton channel. CF(1) has five subunits: alpha(3), beta(3), gamma(1), delta(1), epsilon(1). CF(0) has three main subunits: a, b and c.

The protein resides in the cell inner membrane. Produces ATP from ADP in the presence of a proton gradient across the membrane. The gamma chain is believed to be important in regulating ATPase activity and the flow of protons through the CF(0) complex. In Cytophaga hutchinsonii (strain ATCC 33406 / DSM 1761 / CIP 103989 / NBRC 15051 / NCIMB 9469 / D465), this protein is ATP synthase gamma chain.